The primary structure comprises 88 residues: Small ribosomal subunit protein uS15c (88 aa).

Belongs to the universal ribosomal protein uS15 family. Part of the 30S ribosomal subunit.

It localises to the plastid. The protein resides in the chloroplast. This is Small ribosomal subunit protein uS15c (rps15) from Calycanthus floridus var. glaucus (Eastern sweetshrub).